The following is a 316-amino-acid chain: Pantothenate kinase (316 aa).

95–102 (GSVAVGKS) contacts ATP.

It belongs to the prokaryotic pantothenate kinase family.

It localises to the cytoplasm. It catalyses the reaction (R)-pantothenate + ATP = (R)-4'-phosphopantothenate + ADP + H(+). The protein operates within cofactor biosynthesis; coenzyme A biosynthesis; CoA from (R)-pantothenate: step 1/5. The polypeptide is Pantothenate kinase (Shewanella loihica (strain ATCC BAA-1088 / PV-4)).